Consider the following 206-residue polypeptide: 7-methyl-GTP pyrophosphatase (206 aa).

D82 acts as the Proton acceptor in catalysis.

It belongs to the Maf family. YceF subfamily. A divalent metal cation serves as cofactor.

It localises to the cytoplasm. It catalyses the reaction N(7)-methyl-GTP + H2O = N(7)-methyl-GMP + diphosphate + H(+). In terms of biological role, nucleoside triphosphate pyrophosphatase that hydrolyzes 7-methyl-GTP (m(7)GTP). May have a dual role in cell division arrest and in preventing the incorporation of modified nucleotides into cellular nucleic acids. This Shewanella denitrificans (strain OS217 / ATCC BAA-1090 / DSM 15013) protein is 7-methyl-GTP pyrophosphatase.